A 154-amino-acid polypeptide reads, in one-letter code: SsrA-binding protein (154 aa).

The protein belongs to the SmpB family.

The protein localises to the cytoplasm. Functionally, required for rescue of stalled ribosomes mediated by trans-translation. Binds to transfer-messenger RNA (tmRNA), required for stable association of tmRNA with ribosomes. tmRNA and SmpB together mimic tRNA shape, replacing the anticodon stem-loop with SmpB. tmRNA is encoded by the ssrA gene; the 2 termini fold to resemble tRNA(Ala) and it encodes a 'tag peptide', a short internal open reading frame. During trans-translation Ala-aminoacylated tmRNA acts like a tRNA, entering the A-site of stalled ribosomes, displacing the stalled mRNA. The ribosome then switches to translate the ORF on the tmRNA; the nascent peptide is terminated with the 'tag peptide' encoded by the tmRNA and targeted for degradation. The ribosome is freed to recommence translation, which seems to be the essential function of trans-translation. The sequence is that of SsrA-binding protein from Staphylococcus aureus (strain USA300).